We begin with the raw amino-acid sequence, 344 residues long: Probable dual-specificity RNA methyltransferase RlmN (344 aa).

Glutamate 89 serves as the catalytic Proton acceptor. Residues 95-329 (TDQRLTVCVS…VSLRASRGLD (235 aa)) enclose the Radical SAM core domain. A disulfide bridge links cysteine 102 with cysteine 334. [4Fe-4S] cluster-binding residues include cysteine 109, cysteine 113, and cysteine 116. S-adenosyl-L-methionine is bound by residues 156–157 (GE), serine 186, 215–217 (SLH), and asparagine 291. Cysteine 334 (S-methylcysteine intermediate) is an active-site residue.

The protein belongs to the radical SAM superfamily. RlmN family. It depends on [4Fe-4S] cluster as a cofactor.

The protein localises to the cytoplasm. It carries out the reaction adenosine(2503) in 23S rRNA + 2 reduced [2Fe-2S]-[ferredoxin] + 2 S-adenosyl-L-methionine = 2-methyladenosine(2503) in 23S rRNA + 5'-deoxyadenosine + L-methionine + 2 oxidized [2Fe-2S]-[ferredoxin] + S-adenosyl-L-homocysteine. The enzyme catalyses adenosine(37) in tRNA + 2 reduced [2Fe-2S]-[ferredoxin] + 2 S-adenosyl-L-methionine = 2-methyladenosine(37) in tRNA + 5'-deoxyadenosine + L-methionine + 2 oxidized [2Fe-2S]-[ferredoxin] + S-adenosyl-L-homocysteine. Functionally, specifically methylates position 2 of adenine 2503 in 23S rRNA and position 2 of adenine 37 in tRNAs. This is Probable dual-specificity RNA methyltransferase RlmN from Parasynechococcus marenigrum (strain WH8102).